Here is a 321-residue protein sequence, read N- to C-terminus: Mas-related G-protein coupled receptor member H (321 aa).

Residues 1–35 lie on the Extracellular side of the membrane; sequence MEPLATTLCPQECTQTTRNETPNETTWSSEHVTKY. N23 carries an N-linked (GlcNAc...) asparagine glycan. A helical transmembrane segment spans residues 36-56; it reads TYISISLVICSLGLVGNGLLI. Topologically, residues 57 to 71 are cytoplasmic; that stretch reads WFLIFCIKRKPFTIY. The chain crosses the membrane as a helical span at residues 72–92; the sequence is ILHLAFADFMVLLCSSIIQLV. The Extracellular portion of the chain corresponds to 93 to 102; the sequence is NTFHIYDSTL. The chain crosses the membrane as a helical span at residues 103-126; that stretch reads VSYAVLFMIFGYNTGLHLLTAISV. Over 127-147 the chain is Cytoplasmic; it reads ERCLSVLYPIWYHCRRPKHQS. Residues 148–168 form a helical membrane-spanning segment; it reads TVACTLLWALSVLVSGLENFF. Topologically, residues 169–188 are extracellular; sequence CILEVKPQFPECRYVYIFSC. Residues 189–209 form a helical membrane-spanning segment; that stretch reads TLTFLVFVPLMVFSNLILFIQ. The Cytoplasmic segment spans residues 210 to 225; that stretch reads VCCNLKPRQPAKLYVI. A helical transmembrane segment spans residues 226-246; it reads IMATVILFLVFAMPMKVLLII. G247 is a topological domain (extracellular). The chain crosses the membrane as a helical span at residues 248–271; the sequence is YYSNSTDASVWKSLPYLNMLSTIN. Topologically, residues 272-320 are cytoplasmic; sequence CSINPIVYFVVGSLRRKRSRKSLKEALQKVFEEKPVVASRENEVQFSLP.

Belongs to the G-protein coupled receptor 1 family. Mas subfamily.

It localises to the cell membrane. Its function is as follows. Orphan receptor. May regulate nociceptor function and/or development, including the sensation or modulation of pain. The chain is Mas-related G-protein coupled receptor member H (Mrgprh) from Rattus norvegicus (Rat).